The following is a 131-amino-acid chain: DNA-directed RNA polymerase subunit omega (131 aa).

The protein belongs to the RNA polymerase subunit omega family. The RNAP catalytic core consists of 2 alpha, 1 beta, 1 beta' and 1 omega subunit. When a sigma factor is associated with the core the holoenzyme is formed, which can initiate transcription.

The catalysed reaction is RNA(n) + a ribonucleoside 5'-triphosphate = RNA(n+1) + diphosphate. Promotes RNA polymerase assembly. Latches the N- and C-terminal regions of the beta' subunit thereby facilitating its interaction with the beta and alpha subunits. This is DNA-directed RNA polymerase subunit omega from Chelativorans sp. (strain BNC1).